The chain runs to 495 residues: Zinc finger and SCAN domain-containing protein 5B (495 aa).

The interval M1–P40 is disordered. Over residues S17–G34 the composition is skewed to polar residues. Positions H44–K126 constitute an SCAN box domain. Disordered stretches follow at residues A150 to Q183 and E227 to Q347. A compositionally biased stretch (polar residues) spans V161–H173. Positions R250 to S262 are enriched in basic and acidic residues. Polar residues predominate over residues N292–E310. C2H2-type zinc fingers lie at residues F355–H377, F383–H405, Y411–H433, F439–H461, and Y467–H489.

The protein resides in the nucleus. Its function is as follows. May be involved in transcriptional regulation. The protein is Zinc finger and SCAN domain-containing protein 5B (ZSCAN5B) of Homo sapiens (Human).